The following is an 86-amino-acid chain: Large ribosomal subunit protein bL27 (86 aa).

Over residues 1–10 (MAQKKGGGST) the composition is skewed to gly residues. Residues 1-21 (MAQKKGGGSTRNGRDSESKRL) are disordered.

It belongs to the bacterial ribosomal protein bL27 family.

The protein is Large ribosomal subunit protein bL27 of Cupriavidus taiwanensis (strain DSM 17343 / BCRC 17206 / CCUG 44338 / CIP 107171 / LMG 19424 / R1) (Ralstonia taiwanensis (strain LMG 19424)).